The sequence spans 272 residues: Ribosomal RNA small subunit methyltransferase A (272 aa).

Residues Asn18, Leu20, Gly45, Glu66, Asp91, and Asn113 each coordinate S-adenosyl-L-methionine.

This sequence belongs to the class I-like SAM-binding methyltransferase superfamily. rRNA adenine N(6)-methyltransferase family. RsmA subfamily.

It is found in the cytoplasm. The enzyme catalyses adenosine(1518)/adenosine(1519) in 16S rRNA + 4 S-adenosyl-L-methionine = N(6)-dimethyladenosine(1518)/N(6)-dimethyladenosine(1519) in 16S rRNA + 4 S-adenosyl-L-homocysteine + 4 H(+). In terms of biological role, specifically dimethylates two adjacent adenosines (A1518 and A1519) in the loop of a conserved hairpin near the 3'-end of 16S rRNA in the 30S particle. May play a critical role in biogenesis of 30S subunits. The sequence is that of Ribosomal RNA small subunit methyltransferase A from Yersinia enterocolitica serotype O:8 / biotype 1B (strain NCTC 13174 / 8081).